A 249-amino-acid chain; its full sequence is Myelin protein P0 (249 aa).

Positions 1–29 are cleaved as a signal peptide; the sequence is MALGAIGDGRLLLLLVGLLSASGPSPTLA. Positions 30 to 143 constitute an Ig-like V-type domain; that stretch reads IHVYTPREVY…DIVGKSSQVT (114 aa). The Extracellular segment spans residues 30–153; sequence IHVYTPREVY…LYVLEKVPTR (124 aa). Residues cysteine 50 and cysteine 127 are joined by a disulfide bond. An N-linked (GlcNAc...) asparagine glycan is attached at asparagine 122. A helical transmembrane segment spans residues 154–179; that stretch reads YGVVLGSIIGGVLLLVALLVAVVYLV. At 180 to 249 the chain is on the cytoplasmic side; the sequence is RFCWLRRQAV…APGEARKDKK (70 aa). The segment at 227 to 249 is disordered; it reads RSAKAAAEKKSKGAPGEARKDKK.

It belongs to the myelin P0 protein family. As to expression, found only in peripheral nervous system Schwann cells.

It localises to the cell membrane. In terms of biological role, is an adhesion molecule necessary for normal myelination in the peripheral nervous system. It mediates adhesion between adjacent myelin wraps and ultimately drives myelin compaction. The protein is Myelin protein P0 (MPZ) of Gallus gallus (Chicken).